A 79-amino-acid chain; its full sequence is Putative defensin-like protein 146 (79 aa).

The signal sequence occupies residues 1–25 (MMKNQFQLSLIILTFFILLELGVMG). 4 disulfides stabilise this stretch: cysteine 35-cysteine 78, cysteine 46-cysteine 66, cysteine 51-cysteine 72, and cysteine 55-cysteine 74.

The protein belongs to the DEFL family.

It localises to the secreted. This chain is Putative defensin-like protein 146 (LCR9), found in Arabidopsis thaliana (Mouse-ear cress).